We begin with the raw amino-acid sequence, 268 residues long: Fibroblast growth factor 5 (268 aa).

The first 20 residues, 1–20, serve as a signal peptide directing secretion; it reads MSLSFLLLLFFSHLILSAWA. Residues 26–81 form a disordered region; the sequence is LAPKGQPGPAATDRNPRGSSSRQSSSSAMSSSSASSSPAASLGSQGSGLEQSSFQW. The span at 43-80 shows a compositional bias: low complexity; the sequence is GSSSRQSSSSAMSSSSASSSPAASLGSQGSGLEQSSFQ. An N-linked (GlcNAc...) asparagine glycan is attached at Asn110. Residues 233 to 255 are disordered; sequence VPEKKKPPSPIKPKIPLSAPRKN.

It belongs to the heparin-binding growth factors family. In terms of assembly, interacts with FGFR1 and FGFR2. Affinity between fibroblast growth factors (FGFs) and their receptors is increased by heparan sulfate glycosaminoglycans that function as coreceptors. In terms of tissue distribution, expressed in neonatal brain.

The protein resides in the secreted. In terms of biological role, plays an important role in the regulation of cell proliferation and cell differentiation. Required for normal regulation of the hair growth cycle. Functions as an inhibitor of hair elongation by promoting progression from anagen, the growth phase of the hair follicle, into catagen the apoptosis-induced regression phase. The polypeptide is Fibroblast growth factor 5 (FGF5) (Homo sapiens (Human)).